The sequence spans 560 residues: Membrane protein insertase YidC (560 aa).

Residues 1-21 traverse the membrane as a helical segment; the sequence is MDIKRTILIAALAVVSYVMVL. A disordered region spans residues 42–66; that stretch reads VAPGLPDGVPAGNNGASADVPSANA. The next 5 membrane-spanning stretches (helical) occupy residues 341–361, 367–387, 437–457, 468–488, and 515–535; these read LELT…FWLL, LLGN…GLFF, LGGC…YWVL, WILW…PIIM, and PIIF…YWVV.

This sequence belongs to the OXA1/ALB3/YidC family. Type 1 subfamily. As to quaternary structure, interacts with the Sec translocase complex via SecD. Specifically interacts with transmembrane segments of nascent integral membrane proteins during membrane integration.

Its subcellular location is the cell inner membrane. In terms of biological role, required for the insertion and/or proper folding and/or complex formation of integral membrane proteins into the membrane. Involved in integration of membrane proteins that insert both dependently and independently of the Sec translocase complex, as well as at least some lipoproteins. Aids folding of multispanning membrane proteins. This Pseudomonas putida (strain ATCC 47054 / DSM 6125 / CFBP 8728 / NCIMB 11950 / KT2440) protein is Membrane protein insertase YidC.